We begin with the raw amino-acid sequence, 243 residues long: 23S rRNA (guanosine-2'-O-)-methyltransferase RlmB (243 aa).

S-adenosyl-L-methionine-binding residues include Gly-196, Ile-216, and Leu-225.

Belongs to the class IV-like SAM-binding methyltransferase superfamily. RNA methyltransferase TrmH family. RlmB subfamily. As to quaternary structure, homodimer.

It localises to the cytoplasm. It carries out the reaction guanosine(2251) in 23S rRNA + S-adenosyl-L-methionine = 2'-O-methylguanosine(2251) in 23S rRNA + S-adenosyl-L-homocysteine + H(+). Its function is as follows. Specifically methylates the ribose of guanosine 2251 in 23S rRNA. The protein is 23S rRNA (guanosine-2'-O-)-methyltransferase RlmB of Shigella flexneri.